Here is a 234-residue protein sequence, read N- to C-terminus: Sugar fermentation stimulation protein A (234 aa).

Positions 201-220 (LLSEAQQRGVEILAYKAEIS) form a DNA-binding region, H-T-H motif.

The protein belongs to the SfsA family.

Functionally, binds to DNA non-specifically. Could be a regulatory factor involved in maltose metabolism. In Shigella dysenteriae serotype 1 (strain Sd197), this protein is Sugar fermentation stimulation protein A.